The primary structure comprises 205 residues: G-protein coupled receptor (205 aa).

Transmembrane regions (helical) follow at residues 40-60, 71-91, 107-127, 151-171, and 185-205; these read GITL…MILY, FYVI…FFMT, LVYF…AIIA, IGIL…FVQI, and LSSP…SFIW. Cys-105 and Cys-181 are oxidised to a cystine.

The protein belongs to the G-protein coupled receptor 1 family.

Its subcellular location is the host membrane. In Human herpesvirus 6B (strain Z29) (HHV-6 variant B), this protein is G-protein coupled receptor (U12).